The following is a 206-amino-acid chain: uncharacterized protein (206 aa).

This is an uncharacterized protein from Methanocaldococcus jannaschii (strain ATCC 43067 / DSM 2661 / JAL-1 / JCM 10045 / NBRC 100440) (Methanococcus jannaschii).